The following is a 126-amino-acid chain: uncharacterized protein (126 aa).

A disordered region spans residues 1–27; sequence MSKSKTPNFDDMEVLDDTNDEYDDSES. Residues 10–27 show a composition bias toward acidic residues; it reads DDMEVLDDTNDEYDDSES.

This is an uncharacterized protein from Halorubrum sp. PV6 (HRPV-1).